Reading from the N-terminus, the 188-residue chain is Peptidyl-tRNA hydrolase (188 aa).

Tyrosine 14 provides a ligand contact to tRNA. The active-site Proton acceptor is the histidine 19. Residues tyrosine 64, asparagine 66, and asparagine 112 each contribute to the tRNA site.

This sequence belongs to the PTH family. In terms of assembly, monomer.

The protein localises to the cytoplasm. The catalysed reaction is an N-acyl-L-alpha-aminoacyl-tRNA + H2O = an N-acyl-L-amino acid + a tRNA + H(+). Its function is as follows. Hydrolyzes ribosome-free peptidyl-tRNAs (with 1 or more amino acids incorporated), which drop off the ribosome during protein synthesis, or as a result of ribosome stalling. Functionally, catalyzes the release of premature peptidyl moieties from peptidyl-tRNA molecules trapped in stalled 50S ribosomal subunits, and thus maintains levels of free tRNAs and 50S ribosomes. This chain is Peptidyl-tRNA hydrolase, found in Leuconostoc mesenteroides subsp. mesenteroides (strain ATCC 8293 / DSM 20343 / BCRC 11652 / CCM 1803 / JCM 6124 / NCDO 523 / NBRC 100496 / NCIMB 8023 / NCTC 12954 / NRRL B-1118 / 37Y).